Consider the following 119-residue polypeptide: Ribosome-binding factor A (119 aa).

The protein belongs to the RbfA family. In terms of assembly, monomer. Binds 30S ribosomal subunits, but not 50S ribosomal subunits or 70S ribosomes.

It is found in the cytoplasm. One of several proteins that assist in the late maturation steps of the functional core of the 30S ribosomal subunit. Associates with free 30S ribosomal subunits (but not with 30S subunits that are part of 70S ribosomes or polysomes). Required for efficient processing of 16S rRNA. May interact with the 5'-terminal helix region of 16S rRNA. The polypeptide is Ribosome-binding factor A (Coxiella burnetii (strain CbuG_Q212) (Coxiella burnetii (strain Q212))).